We begin with the raw amino-acid sequence, 270 residues long: Glutamate 5-kinase (270 aa).

Position 18 (K18) interacts with ATP. Substrate-binding residues include S54, D141, and N153. Residue 173–174 (SD) participates in ATP binding.

This sequence belongs to the glutamate 5-kinase family.

The protein resides in the cytoplasm. It catalyses the reaction L-glutamate + ATP = L-glutamyl 5-phosphate + ADP. It participates in amino-acid biosynthesis; L-proline biosynthesis; L-glutamate 5-semialdehyde from L-glutamate: step 1/2. In terms of biological role, catalyzes the transfer of a phosphate group to glutamate to form L-glutamate 5-phosphate. This Leifsonia xyli subsp. xyli (strain CTCB07) protein is Glutamate 5-kinase.